The following is a 340-amino-acid chain: Probable rRNA-processing protein EBP2 homolog (340 aa).

Residues 1–10 (MVRKMNKLAK) show a composition bias toward basic residues. Disordered regions lie at residues 1-59 (MVRK…DDDE) and 245-340 (HGLD…RGRR). Composition is skewed to acidic residues over residues 23 to 37 (PESD…FDNA) and 46 to 59 (MDIE…DDDE). Residues 206-245 (QKEVLAAKNTEKKNLAEAVKKHKKGMKQQLEDMLNNVKRH) adopt a coiled-coil conformation. 2 stretches are compositionally biased toward gly residues: residues 264-277 (GRGG…GRGG) and 318-333 (PRGG…GRGG).

Belongs to the EBP2 family.

The protein resides in the nucleus. Its subcellular location is the nucleolus. Its function is as follows. Required for the processing of the 27S pre-rRNA. In Caenorhabditis elegans, this protein is Probable rRNA-processing protein EBP2 homolog.